A 1250-amino-acid chain; its full sequence is Phospholipid-transporting ATPase IC (1250 aa).

Composition is skewed to acidic residues over residues 1–13 (MDTDYESTYEDDS) and 24–40 (SDDETDDELDSPQTDEP). Positions 1-52 (MDTDYESTYEDDSQVPNDDVVPYSDDETDDELDSPQTDEPEQNRRNVQAEQS) are disordered. The Cytoplasmic segment spans residues 1 to 133 (MDTDYESTYE…VLLILQTIPQ (133 aa)). The helical transmembrane segment at 134–154 (ISTVTWSTTLIPLLLVLGITA) threads the bilayer. Residues 155–338 (IKDLVDDIAR…TKIDYLMNYM (184 aa)) are Exoplasmic loop-facing. A helical transmembrane segment spans residues 339–359 (VYTIFVLLILAAAGLAIGQTF). Residues 360–385 (WEAKLGAANVSWYLYDGNNYSPSYRG) are Cytoplasmic-facing. Residues 386-406 (FLAFWGYIIVLNTMVPISLYV) form a helical membrane-spanning segment. Residues 407–956 (SVEVIRLGQS…KFLRYFFYKN (550 aa)) lie on the Exoplasmic loop side of the membrane. The active-site 4-aspartylphosphate intermediate is the aspartate 454. The ATP site is built by aspartate 454, lysine 455, threonine 456, glutamate 553, phenylalanine 594, lysine 617, arginine 650, threonine 730, glycine 731, aspartate 732, arginine 865, and lysine 871. Aspartate 454 provides a ligand contact to Mg(2+). Threonine 456 provides a ligand contact to Mg(2+). Aspartate 891 lines the Mg(2+) pocket. Residues asparagine 894 and aspartate 895 each coordinate ATP. Aspartate 895 contacts Mg(2+). Residues 957–977 (FSFTLVHFWYSFFNGFSAQTV) form a helical membrane-spanning segment. The Cytoplasmic portion of the chain corresponds to 978–980 (YED). Residues 981–1001 (WFITLYNVLYSSLPVLLVGLL) form a helical membrane-spanning segment. Topologically, residues 1002–1034 (DQDVSDKLSLAFPRLYVPGQKDLLFNYKKFFLS) are exoplasmic loop. The helical transmembrane segment at 1035 to 1055 (LFHGIVTSLIIFFIPYGAFLL) threads the bilayer. At 1056-1069 (TMGQDGEAPSDYQS) the chain is on the cytoplasmic side. Residues 1070–1090 (FAVTTATALVITVNFQIGLDT) traverse the membrane as a helical segment. The Exoplasmic loop portion of the chain corresponds to 1091–1092 (SY). Residues 1093–1113 (WTFVNAFSIFGSIAIYFGIMF) form a helical membrane-spanning segment. Residues 1114 to 1117 (DLHS) lie on the Cytoplasmic side of the membrane. A helical membrane pass occupies residues 1118-1138 (AGIHVLFPSMFIFTGAAPNAL). Topologically, residues 1139 to 1140 (RQ) are exoplasmic loop. A helical transmembrane segment spans residues 1141 to 1161 (PYLWLTIILTVAFCLLPIVAL). Over 1162–1250 (RFLAKTIWPS…AQITHFTPQT (89 aa)) the chain is Cytoplasmic.

Belongs to the cation transport ATPase (P-type) (TC 3.A.3) family. Type IV subfamily. In terms of assembly, component of a P4-ATPase flippase complex which consists of a catalytic alpha subunit and an accessory beta subunit. The flippase ATP8B1:TMEM30A complex can form an intermediate phosphoenzyme in vitro. Also interacts with beta subunit TMEM30B. Requires Mg(2+) as cofactor.

The protein resides in the cell membrane. Its subcellular location is the apical cell membrane. The protein localises to the cell projection. It localises to the stereocilium. It is found in the endoplasmic reticulum. The protein resides in the golgi apparatus. The enzyme catalyses ATP + H2O + phospholipidSide 1 = ADP + phosphate + phospholipidSide 2.. It carries out the reaction a 1,2-diacyl-sn-glycero-3-phospho-L-serine(out) + ATP + H2O = a 1,2-diacyl-sn-glycero-3-phospho-L-serine(in) + ADP + phosphate + H(+). In terms of biological role, catalytic component of a P4-ATPase flippase complex which catalyzes the hydrolysis of ATP coupled to the transport of aminophospholipids from the outer to the inner leaflet of various membranes and ensures the maintenance of asymmetric distribution of phospholipids. Phospholipid translocation also seems to be implicated in vesicle formation and in uptake of lipid signaling molecules. May also participate in the establishment of the canalicular membrane integrity by ensuring asymmetric distribution of phospholipids in the canicular membrane. This chain is Phospholipid-transporting ATPase IC (atp8b1), found in Xenopus tropicalis (Western clawed frog).